The chain runs to 356 residues: Peptide chain release factor 1 (356 aa).

The residue at position 232 (glutamine 232) is an N5-methylglutamine. The segment at 281–301 is disordered; that stretch reads ERQSSELSADRKAQVGSGDRS.

Belongs to the prokaryotic/mitochondrial release factor family. Post-translationally, methylated by PrmC. Methylation increases the termination efficiency of RF1.

Its subcellular location is the cytoplasm. Its function is as follows. Peptide chain release factor 1 directs the termination of translation in response to the peptide chain termination codons UAG and UAA. The chain is Peptide chain release factor 1 from Desulfovibrio desulfuricans (strain ATCC 27774 / DSM 6949 / MB).